The following is a 152-amino-acid chain: Cyanate hydratase (152 aa).

Residues R98, E101, and S124 contribute to the active site.

Belongs to the cyanase family.

The catalysed reaction is cyanate + hydrogencarbonate + 3 H(+) = NH4(+) + 2 CO2. In terms of biological role, catalyzes the reaction of cyanate with bicarbonate to produce ammonia and carbon dioxide. The protein is Cyanate hydratase of Uncinocarpus reesii (strain UAMH 1704).